Here is a 353-residue protein sequence, read N- to C-terminus: tRNA N6-adenosine threonylcarbamoyltransferase (353 aa).

Fe cation-binding residues include histidine 109 and histidine 113. Substrate-binding positions include threonine 136–glycine 140, aspartate 169, glycine 182, aspartate 186, and asparagine 284. Aspartate 312 serves as a coordination point for Fe cation.

This sequence belongs to the KAE1 / TsaD family. Fe(2+) serves as cofactor.

The protein resides in the cytoplasm. The enzyme catalyses L-threonylcarbamoyladenylate + adenosine(37) in tRNA = N(6)-L-threonylcarbamoyladenosine(37) in tRNA + AMP + H(+). Functionally, required for the formation of a threonylcarbamoyl group on adenosine at position 37 (t(6)A37) in tRNAs that read codons beginning with adenine. Is involved in the transfer of the threonylcarbamoyl moiety of threonylcarbamoyl-AMP (TC-AMP) to the N6 group of A37, together with TsaE and TsaB. TsaD likely plays a direct catalytic role in this reaction. This chain is tRNA N6-adenosine threonylcarbamoyltransferase, found in Chlorobaculum tepidum (strain ATCC 49652 / DSM 12025 / NBRC 103806 / TLS) (Chlorobium tepidum).